Consider the following 149-residue polypeptide: Transcriptional repressor NrdR (149 aa).

A zinc finger spans residues 3-34 (CPFCSATDTKVIDSRLVAEGHQVRRRRECTEC). The ATP-cone domain occupies 49 to 139 (PRVIKRDGSR…VYRAFEDVSE (91 aa)).

The protein belongs to the NrdR family. The cofactor is Zn(2+).

Its function is as follows. Negatively regulates transcription of bacterial ribonucleotide reductase nrd genes and operons by binding to NrdR-boxes. The polypeptide is Transcriptional repressor NrdR (Shewanella baltica (strain OS223)).